Here is a 270-residue protein sequence, read N- to C-terminus: 5'-AMP-activated protein kinase subunit beta-1 (270 aa).

Residues 1–43 (MGNTSSERAALERHGGHKTPRRDSSGGTKDGDRPKILMDSPED) form a disordered region. Gly2 carries the N-myristoyl glycine lipid modification. The residue at position 4 (Thr4) is a Phosphothreonine. A phosphoserine mark is found at Ser5 and Ser6. The residue at position 19 (Thr19) is a Phosphothreonine. Basic and acidic residues predominate over residues 21–36 (RRDSSGGTKDGDRPKI). Ser24 and Ser25 each carry phosphoserine; by autocatalysis. Ser40, Ser96, Ser101, and Ser108 each carry phosphoserine. Residues 68 to 163 (EVNDKAPAQA…QVKKTDFEVF (96 aa)) are glycogen-binding domain. Thr148 is modified (phosphothreonine). Residue Ser182 is modified to Phosphoserine.

The protein belongs to the 5'-AMP-activated protein kinase beta subunit family. In terms of assembly, AMPK is a heterotrimer of an alpha catalytic subunit (PRKAA1 or PRKAA2), a beta (PRKAB1 or PRKAB2) and a gamma non-catalytic subunits (PRKAG1, PRKAG2 or PRKAG3). Interacts with FNIP1 and FNIP2. Post-translationally, phosphorylated when associated with the catalytic subunit (PRKAA1 or PRKAA2). Phosphorylated by ULK1; leading to negatively regulate AMPK activity and suggesting the existence of a regulatory feedback loop between ULK1 and AMPK.

Its function is as follows. Non-catalytic subunit of AMP-activated protein kinase (AMPK), an energy sensor protein kinase that plays a key role in regulating cellular energy metabolism. In response to reduction of intracellular ATP levels, AMPK activates energy-producing pathways and inhibits energy-consuming processes: inhibits protein, carbohydrate and lipid biosynthesis, as well as cell growth and proliferation. AMPK acts via direct phosphorylation of metabolic enzymes, and by longer-term effects via phosphorylation of transcription regulators. Also acts as a regulator of cellular polarity by remodeling the actin cytoskeleton; probably by indirectly activating myosin. Beta non-catalytic subunit acts as a scaffold on which the AMPK complex assembles, via its C-terminus that bridges alpha (PRKAA1 or PRKAA2) and gamma subunits (PRKAG1, PRKAG2 or PRKAG3). The protein is 5'-AMP-activated protein kinase subunit beta-1 (PRKAB1) of Homo sapiens (Human).